The chain runs to 919 residues: Probable dipeptidyl-aminopeptidase B (919 aa).

A compositionally biased stretch (basic and acidic residues) spans 1–10; it reads MRPSDDHGET. The segment at 1–50 is disordered; it reads MRPSDDHGETSEFLPITRSRSVSAASQTSTDSSLSTESLFPGEQKPFPNV. Over 1-92 the chain is Cytoplasmic; the sequence is MRPSDDHGET…AATGGGRARR (92 aa). A compositionally biased stretch (low complexity) spans 21–38; it reads SVSAASQTSTDSSLSTES. Residues 93–113 form a helical; Signal-anchor for type II membrane protein membrane-spanning segment; the sequence is IFWILVLLCLGGWLLAFALFL. Topologically, residues 114-919 are vacuolar; that stretch reads TGGRANYQTA…MKRSLPLLYP (806 aa). N-linked (GlcNAc...) asparagine glycans are attached at residues asparagine 200, asparagine 352, and asparagine 643. Catalysis depends on serine 757, which acts as the Charge relay system. The N-linked (GlcNAc...) asparagine glycan is linked to asparagine 811. Residues aspartate 834 and histidine 867 each act as charge relay system in the active site.

Belongs to the peptidase S9B family.

It localises to the vacuole membrane. It catalyses the reaction Release of an N-terminal dipeptide, Xaa-Yaa-|-Zaa-, from a polypeptide, preferentially when Yaa is Pro, provided Zaa is neither Pro nor hydroxyproline.. Its function is as follows. Type IV dipeptidyl-peptidase which removes N-terminal dipeptides sequentially from polypeptides having unsubstituted N-termini provided that the penultimate residue is proline. The protein is Probable dipeptidyl-aminopeptidase B (dapB) of Neosartorya fischeri (strain ATCC 1020 / DSM 3700 / CBS 544.65 / FGSC A1164 / JCM 1740 / NRRL 181 / WB 181) (Aspergillus fischerianus).